The primary structure comprises 92 residues: Probable Fe(2+)-trafficking protein (92 aa).

Belongs to the Fe(2+)-trafficking protein family.

Could be a mediator in iron transactions between iron acquisition and iron-requiring processes, such as synthesis and/or repair of Fe-S clusters in biosynthetic enzymes. This chain is Probable Fe(2+)-trafficking protein, found in Shewanella frigidimarina (strain NCIMB 400).